The sequence spans 30 residues: Thermophilic aminopeptidase 1 alpha chain (30 aa).

The protein belongs to the peptidase M42 family. In terms of assembly, 12 chains of two different but homologous types, alpha and beta, which can combine in various ratios. A divalent metal cation serves as cofactor.

In terms of biological role, metalloenzyme of broad specificity, releasing all N-terminal amino acids. This Geobacillus stearothermophilus (Bacillus stearothermophilus) protein is Thermophilic aminopeptidase 1 alpha chain.